The primary structure comprises 366 residues: Homer protein homolog 1 (366 aa).

The region spanning 1-110 (MGEQPIFSTR…EKFQEFKEAA (110 aa)) is the WH1 domain. At glycine 2 the chain carries N-acetylglycine. Positions 114–189 (KEKSQEKMEL…RTQGLSHASS (76 aa)) are disordered. A compositionally biased stretch (polar residues) spans 138 to 147 (SPLTPESING). The stretch at 193–364 (KHWEAELATL…LRDNLAKLLE (172 aa)) forms a coiled coil. Residues 302–366 (KLQEVEIRNK…DNLAKLLECS (65 aa)) form a required for tetramerization region. A Phosphoserine modification is found at serine 318.

Belongs to the Homer family. Tetramer; this tetrameric structure is critical for forming the high-order complex with SHANK1, which in turn is necessary for the structural and functional integrity of dendritic spines. Interacts with GRM1, GRM5, ITPR1, DYN3, RYR1, RYR2 and SHANK3. Interacts with IFT57 and OPHN1. Isoform 1 and isoform 2 encode coiled-coil structures that mediate homo- and heteromultimerization. Interacts with SHANK1; forms high-order polymerized complex with a mesh-like network structure, at least composed of SHANK1, HOMER1 and DLGAP1; the complex formation is SHANK1 multimerization dependent. Interacts with NFATC4. Interacts with DAGLA (via PPXXF motif); this interaction is required for the cell membrane localization of DAGLA. Interacts with SRGAP2. Highly expressed in cortex, Purkinje cells of the cerebellum, hippocampus, striatum and olfactory bulb. Isoform 1 and isoform 3 are expressed in skeletal and cardiac muscle.

The protein localises to the cytoplasm. It localises to the postsynaptic density. It is found in the synapse. Its subcellular location is the cell projection. The protein resides in the dendritic spine. In terms of biological role, postsynaptic density scaffolding protein. Binds and cross-links cytoplasmic regions of GRM1, GRM5, ITPR1, DNM3, RYR1, RYR2, SHANK1 and SHANK3. By physically linking GRM1 and GRM5 with ER-associated ITPR1 receptors, it aids the coupling of surface receptors to intracellular calcium release. May also couple GRM1 to PI3 kinase through its interaction with AGAP2. Differentially regulates the functions of the calcium activated channel ryanodine receptors RYR1 and RYR2. Isoform 1 decreases the activity of RYR2, and increases the activity of RYR1, whereas isoform 3 counteracts the effects by competing for binding sites. Isoform 1 regulates the trafficking and surface expression of GRM5. Isoform 3 acts as a natural dominant negative, in dynamic competition with constitutively expressed isoform 1, and isoform 2 to regulate synaptic metabotropic glutamate function. Isoform 3, may be involved in the structural changes that occur at synapses during long-lasting neuronal plasticity and development. Forms a high-order complex with SHANK1, which in turn is necessary for the structural and functional integrity of dendritic spines. Negatively regulates T cell activation by inhibiting the calcineurin-NFAT pathway. Acts by competing with calcineurin/PPP3CA for NFAT protein binding, hence preventing NFAT activation by PPP3CA. In Rattus norvegicus (Rat), this protein is Homer protein homolog 1.